The following is a 440-amino-acid chain: Putative epoxide hydrolase (440 aa).

The interval 1 to 21 is disordered; sequence MTKTLAEQPGEGAAPVSPSPS. The segment at residues 1–49 is a signal peptide (tat-type signal); it reads MTKTLAEQPGEGAAPVSPSPSRRALLHGAAGLGALAAGAAVAGPGLAFA.

It belongs to the peptidase S33 family. Predicted to be exported by the Tat system. The position of the signal peptide cleavage has not been experimentally proven.

The catalysed reaction is an epoxide + H2O = an ethanediol. The sequence is that of Putative epoxide hydrolase from Stigmatella aurantiaca (strain DW4/3-1).